The following is a 93-amino-acid chain: YcgL domain-containing protein Ssed_2518 (93 aa).

A YcgL domain is found at 1 to 85 (MICAVYKSRR…PKVNLLEQHK (85 aa)).

The polypeptide is YcgL domain-containing protein Ssed_2518 (Shewanella sediminis (strain HAW-EB3)).